Reading from the N-terminus, the 742-residue chain is MSDEDSMLLNFTTNEDTAGSSYKQAAKVTGGRWKDRRRMKMKLEGKTVSRKRKANTTGDEGIIPGRGENSIKKLHKESSYSSEEQEKYKGRNAHNTQGRTLPADSQFVSSLFTSNREITTAVNTNIHDENVAINPSNAPLKGDQFASLGVTSLLVSHLEQKMRIKKPTSIQKQAIPQIIGNAGKNDFFIHAQTGSGKTLSYLLPIISTILNMDTHVDRTSGAFALVIAPTRELASQIYHVCSTLVSCCHYLVPCLLIGGERKKSEKARLRKGCNFIIGTPGRVLDHLQNTKVIKEQLSQSLRYIVLDEGDKLMELGFDETISEIIKIVHDIPINSEKFPKLPHKLVHMLCSATLTDGVNRLRNVALKDYKLISNGTKKDSDIVTVAPDQLLQRITIVPPKLRLVTLAATLNNITKDFIASGQQSKTLRTIVFVSCSDSVEFHYDAFSGSDGHHKNLTGDSVRLLTKGNTMFPCFSDSRDPDVVIYKLHGSLSQQMRTSTLQHFARDNEATKGKHLIMFCTDVASRGLDLPHVGSVIELDPPFAVEDHLHRVGRTARAGEKGESLLFLLPGEEEKYMDYIQPYHPMGWELLKFDKEILMPAFKDVNVNRNDKFIRKDEKSSKNKDVGDKEYEWDTNATTWHLNIERRVVGDSAFKNLAVKGFISHVRAYATHISQEKKFFNVKFLHLGHLAKSFGLRERPKAMGLQSSKDGNSEKKPTKENSKNKMFRMARMAEKQIASEFNY.

Residues 45–100 (GKTVSRKRKANTTGDEGIIPGRGENSIKKLHKESSYSSEEQEKYKGRNAHNTQGRT) are disordered. The Q motif motif lies at 143–172 (DQFASLGVTSLLVSHLEQKMRIKKPTSIQK). The Helicase ATP-binding domain maps to 178 to 372 (IIGNAGKNDF…NVALKDYKLI (195 aa)). ATP is bound at residue 191-198 (AQTGSGKT). Positions 307–310 (DEGD) match the DEAD box motif. In terms of domain architecture, Helicase C-terminal spans 405 to 605 (TLAATLNNIT…ILMPAFKDVN (201 aa)). Residues 701 to 726 (AMGLQSSKDGNSEKKPTKENSKNKMF) are disordered. Over residues 710–722 (GNSEKKPTKENSK) the composition is skewed to basic and acidic residues.

Belongs to the DEAD box helicase family. DDX31/DBP7 subfamily.

Its subcellular location is the nucleus. The protein resides in the nucleolus. The enzyme catalyses ATP + H2O = ADP + phosphate + H(+). ATP-binding RNA helicase involved in the biogenesis of 60S ribosomal subunits and is required for the normal formation of 25S and 5.8S rRNAs. The chain is ATP-dependent RNA helicase DBP7 (DBP7) from Saccharomyces cerevisiae (strain YJM789) (Baker's yeast).